Reading from the N-terminus, the 226-residue chain is 2-C-methyl-D-erythritol 4-phosphate cytidylyltransferase (226 aa).

It belongs to the IspD/TarI cytidylyltransferase family. IspD subfamily.

The catalysed reaction is 2-C-methyl-D-erythritol 4-phosphate + CTP + H(+) = 4-CDP-2-C-methyl-D-erythritol + diphosphate. It participates in isoprenoid biosynthesis; isopentenyl diphosphate biosynthesis via DXP pathway; isopentenyl diphosphate from 1-deoxy-D-xylulose 5-phosphate: step 2/6. Functionally, catalyzes the formation of 4-diphosphocytidyl-2-C-methyl-D-erythritol from CTP and 2-C-methyl-D-erythritol 4-phosphate (MEP). This chain is 2-C-methyl-D-erythritol 4-phosphate cytidylyltransferase, found in Bacillus cytotoxicus (strain DSM 22905 / CIP 110041 / 391-98 / NVH 391-98).